The primary structure comprises 673 residues: Translation factor GUF1 homolog, mitochondrial (673 aa).

Positions 68-260 (ERIRNFSIIA…AVIERIPSPP (193 aa)) constitute a tr-type G domain. GTP-binding positions include 77-84 (AHVDHGKS), 153-157 (DTPGH), and 207-210 (NKID).

This sequence belongs to the TRAFAC class translation factor GTPase superfamily. Classic translation factor GTPase family. LepA subfamily.

It is found in the mitochondrion inner membrane. It carries out the reaction GTP + H2O = GDP + phosphate + H(+). Its function is as follows. Promotes mitochondrial protein synthesis. May act as a fidelity factor of the translation reaction, by catalyzing a one-codon backward translocation of tRNAs on improperly translocated ribosomes. Binds to mitochondrial ribosomes in a GTP-dependent manner. The polypeptide is Translation factor GUF1 homolog, mitochondrial (Ricinus communis (Castor bean)).